The primary structure comprises 600 residues: Elongation factor 4 (600 aa).

The tr-type G domain maps to 5-187 (KYIRNFSIIA…AIVNKLHPPK (183 aa)). GTP is bound by residues 17–22 (DHGKST) and 134–137 (NKID).

It belongs to the TRAFAC class translation factor GTPase superfamily. Classic translation factor GTPase family. LepA subfamily.

Its subcellular location is the cell inner membrane. It catalyses the reaction GTP + H2O = GDP + phosphate + H(+). Its function is as follows. Required for accurate and efficient protein synthesis under certain stress conditions. May act as a fidelity factor of the translation reaction, by catalyzing a one-codon backward translocation of tRNAs on improperly translocated ribosomes. Back-translocation proceeds from a post-translocation (POST) complex to a pre-translocation (PRE) complex, thus giving elongation factor G a second chance to translocate the tRNAs correctly. Binds to ribosomes in a GTP-dependent manner. This is Elongation factor 4 from Rickettsia akari (strain Hartford).